We begin with the raw amino-acid sequence, 507 residues long: Serine/threonine-protein kinase CBK1 (507 aa).

The segment at 1–30 is disordered; sequence MQKVSGSGKKTTAFQQRKSDSVYNNNEMNK. A Protein kinase domain is found at 126–431; sequence FHTVKVIGKG…ANDIKLHPFF (306 aa). ATP is bound by residues 132-140 and Lys155; that span reads IGKGAFGEV. Asp249 functions as the Proton acceptor in the catalytic mechanism. Positions 432-505 constitute an AGC-kinase C-terminal domain; the sequence is RGVNWDTIRE…KRFDMMTQKG (74 aa).

Belongs to the protein kinase superfamily. STE Ser/Thr protein kinase family. COT1 subfamily.

It catalyses the reaction L-seryl-[protein] + ATP = O-phospho-L-seryl-[protein] + ADP + H(+). It carries out the reaction L-threonyl-[protein] + ATP = O-phospho-L-threonyl-[protein] + ADP + H(+). Its function is as follows. Protein kinase that seems to play a role in signaling pathways necessary for cell growth and mating. In Pneumocystis carinii, this protein is Serine/threonine-protein kinase CBK1 (CBK1).